The chain runs to 1506 residues: Condensin-2 complex subunit D3 (1506 aa).

The interval 154–194 is disordered; the sequence is SNLTQKRKKDHSKSSKDNYRKSRKRGKPPRKEDYQVDELSR. HEAT repeat units lie at residues 442–476, 532–567, and 574–605; these read HKFF…LELS, PGER…LKHC, and QDLL…VMAQ. Phosphoserine is present on serine 562. Polar residues predominate over residues 884–897; that stretch reads SDHLPSSQGTTDAL. Residues 884–908 form a disordered region; the sequence is SDHLPSSQGTTDALDSQPPFQPRSS. One copy of the HEAT 4 repeat lies at 968–1004; the sequence is TVMVDNYIPNISVCLKDSDPFIRKQTLVLLTNLLQEE. Residues 1213-1270 are a coiled coil; sequence ALRELMNYLREVMQDYRDEINDFFAVDKQLASELEYDMKKYNEQLAQEQALTEHANAT. Positions 1317 to 1353 are disordered; that stretch reads QDNADVPPTQSRPSAPRSNFTPTLPPISENGPLKIMS. The segment covering 1324 to 1338 has biased composition (polar residues); it reads PTQSRPSAPRSNFTP. Residues serine 1359, serine 1368, serine 1381, and serine 1393 each carry the phosphoserine modification. Disordered stretches follow at residues 1385-1412 and 1473-1506; these read LPFN…ESDR and PQSP…KTAN. Over residues 1393–1405 the composition is skewed to low complexity; that stretch reads SPENPSSHESSLS. Over residues 1492 to 1506 the composition is skewed to basic residues; that stretch reads SSRRSLRKAPLKTAN.

In terms of assembly, component of the condensin-2 complex, which contains the SMC2 and SMC4 heterodimer, and 3 non SMC subunits that probably regulate the complex: NCAPH2, NCAPD3 and NCAPG2.

It is found in the nucleus. Its function is as follows. Regulatory subunit of the condensin-2 complex, a complex which establishes mitotic chromosome architecture and is involved in physical rigidity of the chromatid axis. May promote the resolution of double-strand DNA catenanes (intertwines) between sister chromatids. Condensin-mediated compaction likely increases tension in catenated sister chromatids, providing directionality for type II topoisomerase-mediated strand exchanges toward chromatid decatenation. Specifically required for decatenation of centromeric ultrafine DNA bridges during anaphase. Early in neurogenesis, may play an essential role to ensure accurate mitotic chromosome condensation in neuron stem cells, ultimately affecting neuron pool and cortex size. This chain is Condensin-2 complex subunit D3 (Ncapd3), found in Mus musculus (Mouse).